The chain runs to 341 residues: Phenylalanine--tRNA ligase alpha subunit (341 aa).

Glu254 serves as a coordination point for Mg(2+).

Belongs to the class-II aminoacyl-tRNA synthetase family. Phe-tRNA synthetase alpha subunit type 1 subfamily. In terms of assembly, tetramer of two alpha and two beta subunits. Mg(2+) serves as cofactor.

Its subcellular location is the cytoplasm. The enzyme catalyses tRNA(Phe) + L-phenylalanine + ATP = L-phenylalanyl-tRNA(Phe) + AMP + diphosphate + H(+). This Mycoplasma genitalium (strain ATCC 33530 / DSM 19775 / NCTC 10195 / G37) (Mycoplasmoides genitalium) protein is Phenylalanine--tRNA ligase alpha subunit (pheS).